We begin with the raw amino-acid sequence, 80 residues long: Putative membrane protein insertion efficiency factor (80 aa).

The protein belongs to the UPF0161 family.

The protein resides in the cell membrane. In terms of biological role, could be involved in insertion of integral membrane proteins into the membrane. This Limosilactobacillus fermentum (strain NBRC 3956 / LMG 18251) (Lactobacillus fermentum) protein is Putative membrane protein insertion efficiency factor.